Consider the following 438-residue polypeptide: Argininosuccinate lyase (438 aa).

It belongs to the lyase 1 family. Argininosuccinate lyase subfamily.

The protein resides in the cytoplasm. It carries out the reaction 2-(N(omega)-L-arginino)succinate = fumarate + L-arginine. It participates in amino-acid biosynthesis; L-arginine biosynthesis; L-arginine from L-ornithine and carbamoyl phosphate: step 3/3. The chain is Argininosuccinate lyase from Clostridium kluyveri (strain NBRC 12016).